A 161-amino-acid polypeptide reads, in one-letter code: Probable ubiquitin-conjugating enzyme E2 16 (161 aa).

In terms of domain architecture, UBC core spans 15–161; the sequence is IATNRLQKEL…TRWWFHDDKV (147 aa). Cys-99 functions as the Glycyl thioester intermediate in the catalytic mechanism.

Belongs to the ubiquitin-conjugating enzyme family.

It catalyses the reaction S-ubiquitinyl-[E1 ubiquitin-activating enzyme]-L-cysteine + [E2 ubiquitin-conjugating enzyme]-L-cysteine = [E1 ubiquitin-activating enzyme]-L-cysteine + S-ubiquitinyl-[E2 ubiquitin-conjugating enzyme]-L-cysteine.. Its pathway is protein modification; protein ubiquitination. In terms of biological role, accepts the ubiquitin from the E1 complex and catalyzes its covalent attachment to other proteins. The polypeptide is Probable ubiquitin-conjugating enzyme E2 16 (UBC16) (Arabidopsis thaliana (Mouse-ear cress)).